A 254-amino-acid polypeptide reads, in one-letter code: Ribosomal RNA small subunit methyltransferase J (254 aa).

S-adenosyl-L-methionine is bound by residues 107 to 108 (RD), 123 to 124 (ER), and Asp177.

Belongs to the methyltransferase superfamily. RsmJ family.

It localises to the cytoplasm. It carries out the reaction guanosine(1516) in 16S rRNA + S-adenosyl-L-methionine = N(2)-methylguanosine(1516) in 16S rRNA + S-adenosyl-L-homocysteine + H(+). Specifically methylates the guanosine in position 1516 of 16S rRNA. The protein is Ribosomal RNA small subunit methyltransferase J of Histophilus somni (strain 129Pt) (Haemophilus somnus).